Consider the following 279-residue polypeptide: Shikimate dehydrogenase (NADP(+)) (279 aa).

Shikimate-binding positions include 20–22 (SRS) and Thr67. Lys71 functions as the Proton acceptor in the catalytic mechanism. Residue Asp83 coordinates NADP(+). Shikimate is bound by residues Asn92 and Asp108. Residues 134-138 (GAGGA) and Leu223 contribute to the NADP(+) site. Position 225 (Tyr225) interacts with shikimate. Gly246 is a binding site for NADP(+).

This sequence belongs to the shikimate dehydrogenase family. Homodimer.

The catalysed reaction is shikimate + NADP(+) = 3-dehydroshikimate + NADPH + H(+). Its pathway is metabolic intermediate biosynthesis; chorismate biosynthesis; chorismate from D-erythrose 4-phosphate and phosphoenolpyruvate: step 4/7. In terms of biological role, involved in the biosynthesis of the chorismate, which leads to the biosynthesis of aromatic amino acids. Catalyzes the reversible NADPH linked reduction of 3-dehydroshikimate (DHSA) to yield shikimate (SA). In Cereibacter sphaeroides (strain ATCC 17025 / ATH 2.4.3) (Rhodobacter sphaeroides), this protein is Shikimate dehydrogenase (NADP(+)).